We begin with the raw amino-acid sequence, 308 residues long: 3'(2'),5'-bisphosphate nucleotidase 1 (308 aa).

Position 2 is an N-acetylalanine (A2). D51 serves as the catalytic Proton acceptor. 4 residues coordinate Mg(2+): E74, D117, V119, and D120. The active-site Proton acceptor is T122. T122 is subject to Phosphothreonine. Residues T195, H198, G220, and K224 each contribute to the AMP site. Position 240 is a phosphoserine (S240). K244 carries the N6-succinyllysine modification. Residue D247 participates in Mg(2+) binding.

This sequence belongs to the inositol monophosphatase superfamily. Mg(2+) serves as cofactor. In terms of tissue distribution, highly expressed in heart, brain, spleen, lung, liver, skeletal muscle, kidney and testis.

It catalyses the reaction adenosine 3',5'-bisphosphate + H2O = AMP + phosphate. It carries out the reaction adenosine 2',5'-bisphosphate + H2O = AMP + phosphate. The enzyme catalyses 3'-phosphoadenylyl sulfate + H2O = adenosine 5'-phosphosulfate + phosphate. The catalysed reaction is 1D-myo-inositol 1,4-bisphosphate + H2O = 1D-myo-inositol 4-phosphate + phosphate. It catalyses the reaction 1D-myo-inositol 1,3,4-trisphosphate + H2O = 1D-myo-inositol 3,4-bisphosphate + phosphate. With respect to regulation, inhibited by Li(+) and Ca(2+), but not by Na(+). Its function is as follows. Phosphatase that converts 3'(2')-phosphoadenosine 5'-phosphate (PAP) to AMP and adenosine 3'-phosphate 5'-phosphosulfate (PAPS) to adenosine 5'-phosphosulfate (APS). Is also able to hydrolyze inositol 1,4-bisphosphate (Ins(1,4)P2) and inositol 1,3,4-trisphosphate (Ins(1,3,4)P3), but is not active on AMP, 3'-AMP, fructose-1,6-bisphosphate, Ins(1)P, Ins(2)P and Ins(1,4,5)P3. Probably prevents the toxic accumulation of PAP, a compound which inhibits a variety of proteins, including PAPS-utilizing enzymes such as sulfotransferases, and RNA processing enzymes. Could also play a role in inositol recycling and phosphoinositide metabolism. This chain is 3'(2'),5'-bisphosphate nucleotidase 1 (Bpnt1), found in Rattus norvegicus (Rat).